A 326-amino-acid polypeptide reads, in one-letter code: Protease inhibitor (326 aa).

A signal peptide spans 1-24; that stretch reads MKTIRTGMMTLAALAVLGTNVVSA. Tandem repeats lie at residues 177-208 and 272-304. Residues 177–304 are 2 X 32 AA approximate repeats; it reads IILHVDKETK…DLKAEMKVFA (128 aa).

Post-translationally, proteolytically cleaved to yield at least three forms (BBRPI-A, -B, and -C).

It is found in the secreted. Shows inhibitory activity towards serine proteases, such as trypsin, chymotrypsin and subtilisin. May form a trypsin-inhibitor complex in a molar ratio of 1:1. The polypeptide is Protease inhibitor (Brevibacillus choshinensis).